We begin with the raw amino-acid sequence, 520 residues long: Aspartate-proton symporter (520 aa).

14 helical membrane passes run 13–33 (LFDLILIGMGAIFGSAWLFAV), 49–69 (ILGGAIILLIGLVYAELGAAL), 85–105 (HLVGYLISFVTIVAYTSLISI), 130–150 (TISGWILQFALLCLFFLLNYW), 161–181 (IISIFKYIVPITIIIVLIFHF), 201–221 (AAISTGGVMFAYLGLHPIVSV), 232–252 (IPIALIICIIVSTIIYTVLQV), 281–301 (IAVMLGLGWLATLVILDAILS), 345–365 (WLSFALSIFWTLPFPSWNALV), 366–386 (NVCSVALILSYAIAPISSAAL), 402–422 (MSIIGPLSFIFTAFIVYWSGW), 425–445 (VSWLLGSQLVMFLIYLCFSKY), 460–480 (AWWLIGFYIMMLIFSYIGSFG), and 482–502 (GLGIISNPVDLILVAIGSLAI).

The protein belongs to the amino acid-polyamine-organocation (APC) superfamily. AGT (TC 2.A.3.11) family.

It localises to the cell membrane. In terms of biological role, uptake of L-aspartate with the concomitant import of a proton. Can also transport aspartate hydroxamate and L-glutamate with lower affinity and efficiency. This Bacillus subtilis (strain 168) protein is Aspartate-proton symporter (yveA).